A 474-amino-acid chain; its full sequence is Aspartyl protease family protein At5g10770 (474 aa).

The first 25 residues, 1–25, serve as a signal peptide directing secretion; sequence MSINRNLLNIIIILCICLNLGCNDG. Residues 132–469 form the Peptidase A1 domain; sequence YIVTVGLGTP…DGAGGRVGFA (338 aa). Residues aspartate 150 and aspartate 352 contribute to the active site. An intrachain disulfide couples cysteine 391 to cysteine 432. Residue asparagine 443 is the site of GPI-anchor amidated asparagine attachment. Positions 444 to 474 are cleaved as a propeptide — removed in mature form; it reads AAIFGNVQQQTLEVVYDGAGGRVGFAPNGCS.

Belongs to the peptidase A1 family.

The protein localises to the cell membrane. In terms of biological role, probably not redundant with AED1 and not involved in restriction of salicylic acid (SA) or systemic acquired resistance (SAR) signaling. In Arabidopsis thaliana (Mouse-ear cress), this protein is Aspartyl protease family protein At5g10770.